A 224-amino-acid chain; its full sequence is tRNA (guanine-N(7)-)-methyltransferase (224 aa).

S-adenosyl-L-methionine is bound by residues Glu57, Asp82, and Asp109. Substrate is bound at residue Asp167.

The protein belongs to the class I-like SAM-binding methyltransferase superfamily. TrmB family.

The enzyme catalyses guanosine(46) in tRNA + S-adenosyl-L-methionine = N(7)-methylguanosine(46) in tRNA + S-adenosyl-L-homocysteine. The protein operates within tRNA modification; N(7)-methylguanine-tRNA biosynthesis. In terms of biological role, catalyzes the formation of N(7)-methylguanine at position 46 (m7G46) in tRNA. The chain is tRNA (guanine-N(7)-)-methyltransferase from Chloroflexus aggregans (strain MD-66 / DSM 9485).